The sequence spans 368 residues: Protein ALTERED XYLOGLUCAN 9 (368 aa).

Residues 1–32 (MLGAIHLGVLAACFVLFVPMAMAGWHLSRNKM) lie on the Cytoplasmic side of the membrane. Residues 33 to 53 (LFFSGALFISLAVCVHLTPYF) form a helical membrane-spanning segment. The Lumenal segment spans residues 54-368 (PSVSDIVASV…ALLIESHQSL (315 aa)). Asn99, Asn137, and Asn235 each carry an N-linked (GlcNAc...) asparagine glycan.

The protein resides in the golgi apparatus membrane. Its function is as follows. Component of the plant cell wall polysaccharide acetylation pathway. Does not directly catalyze O-acetylation of xyloglucan but exhibits weak acetylesterase activity in vitro. The chain is Protein ALTERED XYLOGLUCAN 9 from Arabidopsis thaliana (Mouse-ear cress).